Here is a 324-residue protein sequence, read N- to C-terminus: IDS-like terpene synthase 1 (324 aa).

Aspartate 77 and aspartate 81 together coordinate Mg(2+).

It belongs to the FPP/GGPP synthase family. Mg(2+) serves as cofactor.

It carries out the reaction (2E)-geranyl diphosphate = (E)-beta-ocimene + diphosphate. The catalysed reaction is (2E)-geranyl diphosphate + H2O = linalool + diphosphate. The enzyme catalyses (2E,6E)-farnesyl diphosphate = (3E,6E)-alpha-farnesene + diphosphate. It catalyses the reaction (2E,6E,10E)-geranylgeranyl diphosphate = (E,E,E)-alpha-springene + diphosphate. Its function is as follows. Terpene synthase that shows monoterpene synthase activity and produces (E)-beta-ocimene as a major product and linalool as a minor product, using geranyl diphosphate (GPP) as substrate. Also shows sesquiterpene synthase activity as it is able to convert farnesyl diphosphate (FPP) into (E,E)-alpha-farnesene. Finally, TPS1 can convert geranylgeranyl diphosphate into (E,E,E)-alpha-springene. This is IDS-like terpene synthase 1 from Melampsora larici-populina (strain 98AG31 / pathotype 3-4-7) (Poplar leaf rust fungus).